We begin with the raw amino-acid sequence, 471 residues long: Alpha-galactosidase 5 (471 aa).

The signal sequence occupies residues 1 to 18 (MFAFYFLTACTTLKGVFG). A disulfide bond links cysteine 42 and cysteine 74. Positions 72 and 73 each coordinate substrate. Asparagine 105 is a glycosylation site (N-linked (GlcNAc...) asparagine). A disulfide bridge links cysteine 121 with cysteine 151. Lysine 147 provides a ligand contact to substrate. Residue aspartate 149 is the Nucleophile of the active site. Residue asparagine 175 is glycosylated (N-linked (GlcNAc...) asparagine). Arginine 205 is a substrate binding site. Aspartate 209 acts as the Proton donor in catalysis. Disulfide bonds link cysteine 221–cysteine 237 and cysteine 223–cysteine 230. Residue glutamine 251 participates in substrate binding. Asparagine 270, asparagine 370, asparagine 403, asparagine 422, asparagine 435, and asparagine 454 each carry an N-linked (GlcNAc...) asparagine glycan.

This sequence belongs to the glycosyl hydrolase 27 family. Homotetramer.

Its subcellular location is the secreted. The enzyme catalyses Hydrolysis of terminal, non-reducing alpha-D-galactose residues in alpha-D-galactosides, including galactose oligosaccharides, galactomannans and galactolipids.. This is Alpha-galactosidase 5 (MEL5) from Saccharomyces cerevisiae (Baker's yeast).